Here is a 450-residue protein sequence, read N- to C-terminus: Exodeoxyribonuclease 7 large subunit (450 aa).

The protein belongs to the XseA family. In terms of assembly, heterooligomer composed of large and small subunits.

It is found in the cytoplasm. The catalysed reaction is Exonucleolytic cleavage in either 5'- to 3'- or 3'- to 5'-direction to yield nucleoside 5'-phosphates.. Functionally, bidirectionally degrades single-stranded DNA into large acid-insoluble oligonucleotides, which are then degraded further into small acid-soluble oligonucleotides. The protein is Exodeoxyribonuclease 7 large subunit of Shewanella frigidimarina (strain NCIMB 400).